The sequence spans 400 residues: Protein TFG (400 aa).

An N-acetylmethionine modification is found at Met1. One can recognise a PB1 domain in the interval 10 to 91 (KLIIKAQLGE…RILKLTLFVN (82 aa)). Phosphoserine is present on Ser50. The stretch at 97-124 (LESSQVKYLRRELIELRNKVNRLLDSLE) forms a coiled coil. Disordered regions lie at residues 120–160 (LDSL…STQV) and 187–400 (LTDD…PGYR). Residues 150–160 (SDSSGKQSTQV) show a composition bias toward polar residues. Ser197 bears the Phosphoserine mark. Composition is skewed to low complexity over residues 237 to 258 (GQIEGQMYQQYQQQAGYGAQQP), 265 to 298 (PQQYGIQYSASYSQQTGPQQPQQFQGYGQQPTSQ), and 307 to 327 (QPQQLPAQPPQQYQASNYPAQ). Positions 328–340 (TYTAQTSQPTNYT) are enriched in polar residues. An omega-N-methylarginine mark is found at Arg385 and Arg400.

Self-associates to form an oligomeric complex. Interacts with PDCD6; promoting localization and polymerization of TFG at endoplasmic reticulum exit site. Interacts with SEC16B. In terms of tissue distribution, ubiquitous.

The protein localises to the endoplasmic reticulum. Its function is as follows. Plays a role in the normal dynamic function of the endoplasmic reticulum (ER) and its associated microtubules. Required for secretory cargo traffic from the endoplasmic reticulum to the Golgi apparatus. The polypeptide is Protein TFG (TFG) (Homo sapiens (Human)).